A 132-amino-acid chain; its full sequence is Small ribosomal subunit protein uS11 (132 aa).

The disordered stretch occupies residues 113–132; the sequence is VTPIPHDGTRAPGGKRGRRV.

It belongs to the universal ribosomal protein uS11 family. As to quaternary structure, part of the 30S ribosomal subunit.

Its function is as follows. Located on the platform of the 30S subunit. In Methanocella arvoryzae (strain DSM 22066 / NBRC 105507 / MRE50), this protein is Small ribosomal subunit protein uS11.